Here is a 490-residue protein sequence, read N- to C-terminus: Flap endonuclease 1 (490 aa).

The tract at residues 1 to 106 (MGIKGLTKFL…DELTKRDERR (106 aa)) is N-domain. Position 34 (D34) interacts with Mg(2+). Residues R47 and R72 each contribute to the DNA site. Mg(2+) contacts are provided by D88, E160, E162, D181, and D183. The interval 124–266 (LIKKQSVRTI…STAYKLLKKY (143 aa)) is I-domain. Position 160 (E160) interacts with DNA. Positions 244 and 246 each coordinate DNA. D246 lines the Mg(2+) pocket. Residues 351–359 (SQTCLDGFF) form an interaction with PCNA region. 2 disordered regions span residues 364-396 (NERKNTHETPSRPPLSEKQKSETRKEVDSSLSC) and 421-490 (SSQA…SDED). Over residues 430–442 (ENSSEAPNQSSEI) the composition is skewed to polar residues. The span at 443–454 (KVNKIEENKDSE) shows a compositional bias: basic and acidic residues. The segment covering 455 to 469 (SSTVENTPSLQTKSP) has biased composition (polar residues).

It belongs to the XPG/RAD2 endonuclease family. FEN1 subfamily. In terms of assembly, interacts with PCNA. Three molecules of FEN1 bind to one PCNA trimer with each molecule binding to one PCNA monomer. PCNA stimulates the nuclease activity without altering cleavage specificity. The cofactor is Mg(2+). Phosphorylated. Phosphorylation upon DNA damage induces relocalization to the nuclear plasma.

It localises to the nucleus. The protein localises to the nucleolus. It is found in the nucleoplasm. Its subcellular location is the mitochondrion. Functionally, structure-specific nuclease with 5'-flap endonuclease and 5'-3' exonuclease activities involved in DNA replication and repair. During DNA replication, cleaves the 5'-overhanging flap structure that is generated by displacement synthesis when DNA polymerase encounters the 5'-end of a downstream Okazaki fragment. It enters the flap from the 5'-end and then tracks to cleave the flap base, leaving a nick for ligation. Also involved in the long patch base excision repair (LP-BER) pathway, by cleaving within the apurinic/apyrimidinic (AP) site-terminated flap. Acts as a genome stabilization factor that prevents flaps from equilibrating into structures that lead to duplications and deletions. Also possesses 5'-3' exonuclease activity on nicked or gapped double-stranded DNA, and exhibits RNase H activity. Also involved in replication and repair of rDNA and in repairing mitochondrial DNA. The protein is Flap endonuclease 1 of Cryptosporidium parvum (strain Iowa II).